We begin with the raw amino-acid sequence, 117 residues long: DNA-binding protein VNG_2008H (117 aa).

A disordered region spans residues 1–59 (MSGNPDDDRLEELRQRKKEQLKQQQQGGDAEREAQQQQAQQAEQQKQAMLKQNLTDGAR). A compositionally biased stretch (basic and acidic residues) spans 11-21 (EELRQRKKEQL). The span at 35 to 48 (QQQQAQQAEQQKQA) shows a compositional bias: low complexity.

Belongs to the PDCD5 family.

In Halobacterium salinarum (strain ATCC 700922 / JCM 11081 / NRC-1) (Halobacterium halobium), this protein is DNA-binding protein VNG_2008H.